Consider the following 303-residue polypeptide: N-acetyl-D-glucosamine kinase (303 aa).

ATP contacts are provided by residues 4 to 11 (GFDIGGSK) and 133 to 140 (GVGGGLIV). 4 residues coordinate Zn(2+): His-157, Cys-177, Cys-179, and Cys-184.

This sequence belongs to the ROK (NagC/XylR) family. NagK subfamily.

It catalyses the reaction N-acetyl-D-glucosamine + ATP = N-acetyl-D-glucosamine 6-phosphate + ADP + H(+). The protein operates within cell wall biogenesis; peptidoglycan recycling. Functionally, catalyzes the phosphorylation of N-acetyl-D-glucosamine (GlcNAc) derived from cell-wall degradation, yielding GlcNAc-6-P. In Erwinia tasmaniensis (strain DSM 17950 / CFBP 7177 / CIP 109463 / NCPPB 4357 / Et1/99), this protein is N-acetyl-D-glucosamine kinase.